A 476-amino-acid chain; its full sequence is 23S rRNA (uracil(1939)-C(5))-methyltransferase RlmD (476 aa).

Residues 1-55 form the TRAM domain; that stretch reads MVDEVLKIESLDLEARGIARRDGKVVFVEGALPGERVYAATVRRKPSYEIARVET. Positions 68, 74, 77, and 156 each coordinate [4Fe-4S] cluster. S-adenosyl-L-methionine contacts are provided by Gln265, Phe294, Asn299, Glu315, Asn343, and Asp364. Cys394 functions as the Nucleophile in the catalytic mechanism.

It belongs to the class I-like SAM-binding methyltransferase superfamily. RNA M5U methyltransferase family. RlmD subfamily.

The enzyme catalyses uridine(1939) in 23S rRNA + S-adenosyl-L-methionine = 5-methyluridine(1939) in 23S rRNA + S-adenosyl-L-homocysteine + H(+). In terms of biological role, catalyzes the formation of 5-methyl-uridine at position 1939 (m5U1939) in 23S rRNA. The chain is 23S rRNA (uracil(1939)-C(5))-methyltransferase RlmD from Bordetella avium (strain 197N).